The chain runs to 459 residues: Argininosuccinate lyase (459 aa).

The protein belongs to the lyase 1 family. Argininosuccinate lyase subfamily.

It is found in the cytoplasm. It carries out the reaction 2-(N(omega)-L-arginino)succinate = fumarate + L-arginine. Its pathway is amino-acid biosynthesis; L-arginine biosynthesis; L-arginine from L-ornithine and carbamoyl phosphate: step 3/3. In Sulfurihydrogenibium sp. (strain YO3AOP1), this protein is Argininosuccinate lyase.